The sequence spans 543 residues: Chaperonin GroEL (543 aa).

Residues 29 to 32 (TLGP), 86 to 90 (DGTTT), glycine 413, 476 to 478 (NAA), and aspartate 492 contribute to the ATP site.

Belongs to the chaperonin (HSP60) family. In terms of assembly, forms a cylinder of 14 subunits composed of two heptameric rings stacked back-to-back. Interacts with the co-chaperonin GroES.

It localises to the cytoplasm. It catalyses the reaction ATP + H2O + a folded polypeptide = ADP + phosphate + an unfolded polypeptide.. Functionally, together with its co-chaperonin GroES, plays an essential role in assisting protein folding. The GroEL-GroES system forms a nano-cage that allows encapsulation of the non-native substrate proteins and provides a physical environment optimized to promote and accelerate protein folding. This is Chaperonin GroEL from Streptococcus pyogenes serotype M3 (strain SSI-1).